Here is a 535-residue protein sequence, read N- to C-terminus: T-complex protein 1 subunit beta (535 aa).

Alanine 2 is modified (N-acetylalanine). Serine 3 is modified (phosphoserine). Lysine 13 carries the N6-acetyllysine modification. Glycine 44 serves as a coordination point for ADP. Position 44 (glycine 44) interacts with ATP. Serine 60 carries the post-translational modification Phosphoserine. Aspartate 97 contacts Mg(2+). Glycine 98, threonine 99, threonine 100, and serine 101 together coordinate ADP. Glycine 98, threonine 99, and threonine 100 together coordinate ATP. Residue lysine 154 is modified to N6-acetyllysine. Serine 168 and serine 169 together coordinate ADP. N6-acetyllysine is present on lysine 181. Lysine 248 is covalently cross-linked (Glycyl lysine isopeptide (Lys-Gly) (interchain with G-Cter in SUMO2)). Serine 260 bears the Phosphoserine mark. Position 261 is a phosphothreonine (threonine 261). Residues glycine 410, glutamate 495, and lysine 500 each contribute to the ADP site. ATP is bound by residues glutamate 495 and lysine 500.

This sequence belongs to the TCP-1 chaperonin family. Component of the chaperonin-containing T-complex (TRiC), a hexadecamer composed of two identical back-to-back stacked rings enclosing a protein folding chamber. Each ring is made up of eight different subunits: TCP1/CCT1, CCT2, CCT3, CCT4, CCT5, CCT6A/CCT6, CCT7, CCT8. Interacts with PACRG. Interacts with FLCN. Interacts with DLEC1. Interacts with SVEP1.

The protein localises to the cytoplasm. It catalyses the reaction ATP + H2O = ADP + phosphate + H(+). Functionally, component of the chaperonin-containing T-complex (TRiC), a molecular chaperone complex that assists the folding of actin, tubulin and other proteins upon ATP hydrolysis. The TRiC complex mediates the folding of WRAP53/TCAB1, thereby regulating telomere maintenance. As part of the TRiC complex may play a role in the assembly of BBSome, a complex involved in ciliogenesis regulating transports vesicles to the cilia. The polypeptide is T-complex protein 1 subunit beta (CCT2) (Bos taurus (Bovine)).